Here is a 396-residue protein sequence, read N- to C-terminus: MSIASNSTVIILGSTGSIGTQGLDVISRHPERFTVTGLAAGGAHIELLAQQAAQFHVSEVAVFDETKVPALQAALAQAGAQGVRVTGGPDSVIAMAGSGANVVLNGITGSIGLEPSIAALKAGSQLALANKESVVAGGHLLFSAQVRENQINPVDSEHSAIWQSLRSGTHAEVAKLVVTASGGPFRGWKRADMENITPEQALHHPTWNMGPVVTINSSTLMNKGLEVIEASRLFNVPPERIDVTVHPQSIVHSMVEFVDGATICQASPPDMRLPIALGLSAPDRMTNVAAACDWTQAATWTFEPLDDEAFPAVQLARHCLAASEKHTAVLNAANEQAVHAFLEHRLPYLGIVDTVKAVLDQMDAELRGNPLFTDVEEMNQLELEARRRADDLINKQ.

The NADPH site is built by T15, G16, S17, I18, G41, and N130. Position 131 (K131) interacts with 1-deoxy-D-xylulose 5-phosphate. E132 is an NADPH binding site. D155 contributes to the Mn(2+) binding site. 4 residues coordinate 1-deoxy-D-xylulose 5-phosphate: S156, E157, S181, and H204. E157 is a Mn(2+) binding site. G210 provides a ligand contact to NADPH. S217, N222, K223, and E226 together coordinate 1-deoxy-D-xylulose 5-phosphate. Mn(2+) is bound at residue E226.

This sequence belongs to the DXR family. It depends on Mg(2+) as a cofactor. Mn(2+) serves as cofactor.

It carries out the reaction 2-C-methyl-D-erythritol 4-phosphate + NADP(+) = 1-deoxy-D-xylulose 5-phosphate + NADPH + H(+). It participates in isoprenoid biosynthesis; isopentenyl diphosphate biosynthesis via DXP pathway; isopentenyl diphosphate from 1-deoxy-D-xylulose 5-phosphate: step 1/6. Functionally, catalyzes the NADPH-dependent rearrangement and reduction of 1-deoxy-D-xylulose-5-phosphate (DXP) to 2-C-methyl-D-erythritol 4-phosphate (MEP). The protein is 1-deoxy-D-xylulose 5-phosphate reductoisomerase of Bifidobacterium longum (strain NCC 2705).